The following is a 245-amino-acid chain: DNA polymerase sliding clamp 1 (245 aa).

The protein belongs to the PCNA family. As to quaternary structure, homotrimer. The subunits circularize to form a toroid; DNA passes through its center. Replication factor C (RFC) is required to load the toroid on the DNA.

In terms of biological role, sliding clamp subunit that acts as a moving platform for DNA processing. Responsible for tethering the catalytic subunit of DNA polymerase and other proteins to DNA during high-speed replication. The chain is DNA polymerase sliding clamp 1 from Sulfurisphaera ohwakuensis.